The primary structure comprises 375 residues: Histidine biosynthesis bifunctional protein HisB (375 aa).

Residues 1–168 are histidinol-phosphatase; sequence MTPILFVDRD…GIAHELADAP (168 aa). Aspartate 8 functions as the Nucleophile in the catalytic mechanism. Mg(2+) contacts are provided by aspartate 8, aspartate 10, and aspartate 128. The active-site Proton donor is aspartate 10. The imidazoleglycerol-phosphate dehydratase stretch occupies residues 169 to 375; sequence RRAVVQRNTK…TALPSTKGAL (207 aa).

The protein in the N-terminal section; belongs to the histidinol-phosphatase family. This sequence in the C-terminal section; belongs to the imidazoleglycerol-phosphate dehydratase family. The cofactor is Mg(2+).

It localises to the cytoplasm. It carries out the reaction D-erythro-1-(imidazol-4-yl)glycerol 3-phosphate = 3-(imidazol-4-yl)-2-oxopropyl phosphate + H2O. The enzyme catalyses L-histidinol phosphate + H2O = L-histidinol + phosphate. Its pathway is amino-acid biosynthesis; L-histidine biosynthesis; L-histidine from 5-phospho-alpha-D-ribose 1-diphosphate: step 6/9. It participates in amino-acid biosynthesis; L-histidine biosynthesis; L-histidine from 5-phospho-alpha-D-ribose 1-diphosphate: step 8/9. This Xanthomonas campestris pv. campestris (strain 8004) protein is Histidine biosynthesis bifunctional protein HisB.